A 138-amino-acid polypeptide reads, in one-letter code: Basic phospholipase A2 B (138 aa).

An N-terminal signal peptide occupies residues 1 to 16 (MRALWIVAVLLLGVEG). 7 disulfide bridges follow: Cys42-Cys131, Cys44-Cys60, Cys59-Cys111, Cys65-Cys138, Cys66-Cys104, Cys73-Cys97, and Cys91-Cys102. The Ca(2+) site is built by Tyr43, Gly45, and Gly47. His63 is an active-site residue. Asp64 contacts Ca(2+). Residue Asp105 is part of the active site.

The protein belongs to the phospholipase A2 family. Group II subfamily. D49 sub-subfamily. The cofactor is Ca(2+). In terms of tissue distribution, expressed by the venom gland.

The protein localises to the secreted. The enzyme catalyses a 1,2-diacyl-sn-glycero-3-phosphocholine + H2O = a 1-acyl-sn-glycero-3-phosphocholine + a fatty acid + H(+). Snake venom phospholipase A2 (PLA2) that shows potent hemolytic activity, and exhibits medium anticoagulant effects by binding to factor Xa (F10) and inhibiting the prothrombinase activity (IC(50) is 90 nM). It is one of the few phospholipases A2 capable of hydrolyzing the phospholipids of E.coli membranes in the presence of a bactericidal/permeability-increasing protein (BPI) of neutrophils. PLA2 catalyzes the calcium-dependent hydrolysis of the 2-acyl groups in 3-sn-phosphoglycerides. The chain is Basic phospholipase A2 B from Gloydius halys (Chinese water mocassin).